Reading from the N-terminus, the 907-residue chain is Cytochrome b561, DM13 and DOMON domain-containing protein At5g54830 (907 aa).

The signal sequence occupies residues 1 to 24 (MCDQRPNLLGSLVLLGFFIFFVNG). Residues 31 to 139 (SSLIGHESEF…ASDFGHVLLS (109 aa)) form the DM13 domain. The tract at residues 144-172 (SDTSKAESPPSESNDVAPGKSNNSEPFKA) is disordered. A compositionally biased stretch (polar residues) spans 153–168 (PSESNDVAPGKSNNSE). DOMON domains are found at residues 184–329 (DKYR…WALG) and 524–645 (QQVK…WAMG). Positions 653-850 (LTERNMHSVT…CVVTVAYLEY (198 aa)) constitute a Cytochrome b561 domain. The chain crosses the membrane as a helical span at residues 685 to 705 (VLGVHGFMMFLAWGILLPGGI). The heme b site is built by His-689 and His-723. 4 helical membrane-spanning segments follow: residues 730 to 750 (GLAI…GFSF), 754 to 774 (HVKF…NAWL), 795 to 815 (SHSI…FTGM), and 829 to 849 (GLNL…AYLE). Heme b is bound by residues His-754 and His-796. Residues 884-897 (GGFRDKDDEDRNGG) show a composition bias toward basic and acidic residues. Residues 884–907 (GGFRDKDDEDRNGGRMEIQLEPLK) form a disordered region.

Heme b is required as a cofactor.

It localises to the membrane. In terms of biological role, may act as a catecholamine-responsive trans-membrane electron transporter. In Arabidopsis thaliana (Mouse-ear cress), this protein is Cytochrome b561, DM13 and DOMON domain-containing protein At5g54830.